A 250-amino-acid chain; its full sequence is NAD(P)H-quinone oxidoreductase subunit K (250 aa).

Positions 63, 64, 128, and 159 each coordinate [4Fe-4S] cluster.

Belongs to the complex I 20 kDa subunit family. As to quaternary structure, NDH-1 can be composed of about 15 different subunits; different subcomplexes with different compositions have been identified which probably have different functions. It depends on [4Fe-4S] cluster as a cofactor.

The protein resides in the cellular thylakoid membrane. It carries out the reaction a plastoquinone + NADH + (n+1) H(+)(in) = a plastoquinol + NAD(+) + n H(+)(out). It catalyses the reaction a plastoquinone + NADPH + (n+1) H(+)(in) = a plastoquinol + NADP(+) + n H(+)(out). NDH-1 shuttles electrons from an unknown electron donor, via FMN and iron-sulfur (Fe-S) centers, to quinones in the respiratory and/or the photosynthetic chain. The immediate electron acceptor for the enzyme in this species is believed to be plastoquinone. Couples the redox reaction to proton translocation, and thus conserves the redox energy in a proton gradient. Cyanobacterial NDH-1 also plays a role in inorganic carbon-concentration. This is NAD(P)H-quinone oxidoreductase subunit K from Rippkaea orientalis (strain PCC 8801 / RF-1) (Cyanothece sp. (strain PCC 8801)).